A 123-amino-acid chain; its full sequence is Integration host factor subunit alpha (123 aa).

The segment at 97–123 (NANGTASSMSSSANAAAGDKSESASGT) is disordered. Positions 102–113 (ASSMSSSANAAA) are enriched in low complexity.

The protein belongs to the bacterial histone-like protein family. As to quaternary structure, heterodimer of an alpha and a beta chain.

Its function is as follows. This protein is one of the two subunits of integration host factor, a specific DNA-binding protein that functions in genetic recombination as well as in transcriptional and translational control. This Rhodopseudomonas palustris (strain HaA2) protein is Integration host factor subunit alpha.